Here is a 1337-residue protein sequence, read N- to C-terminus: Nucleoporin POM152 (1337 aa).

The segment at 1-48 (MEHRYNVFNDTPRGNHWMGSSVSGSPRPSYSSRPNVNTTRRFQYSDDE) is disordered. The Cytoplasmic portion of the chain corresponds to 1 to 110 (MEHRYNVFND…TDVLEISKQR (110 aa)). Positions 1–175 (MEHRYNVFND…SFNIPRLTFK (175 aa)) are pore side. Over residues 19-37 (GSSVSGSPRPSYSSRPNVN) the composition is skewed to low complexity. Phosphoserine occurs at positions 45 and 60. The helical transmembrane segment at 111–131 (TFAVILFLIIQCYKIYDLVIL) threads the bilayer. Over 132–148 (KSGLPLSGLLFKNYRFN) the chain is Perinuclear space. A helical membrane pass occupies residues 149–169 (FISKYFIIDSFFLYVLPSFNI). Topologically, residues 170–172 (PRL) are cytoplasmic. A helical membrane pass occupies residues 173–193 (TFKPWVVYLQILAMLLLNIFI). The Perinuclear space segment spans residues 194–1337 (SSDHEFVLIS…FAKNDLFFNN (1144 aa)). Residues 196–1337 (DHEFVLISLI…FAKNDLFFNN (1142 aa)) are cisternal side. N-linked (GlcNAc...) asparagine glycosylation is present at asparagine 280. 8 repeat units span residues 390–413 (DRCI…KLAY), 626–650 (DQCV…YYNT), 732–755 (KLCL…TLTY), 836–859 (KIKH…TVKF), 943–966 (EVCQ…ILEY), 1058–1077 (FLEP…SITF), 1157–1178 (EYCV…MIKY), and 1253–1276 (DIRE…SLTY). Residues 390–1276 (DRCIGDSDNV…EGTPPFSLTY (887 aa)) are 8 X 24 AA approximate repeats.

As to quaternary structure, component of the nuclear pore complex (NPC). NPC constitutes the exclusive means of nucleocytoplasmic transport. NPCs allow the passive diffusion of ions and small molecules and the active, nuclear transport receptor-mediated bidirectional transport of macromolecules such as proteins, RNAs, ribonucleoparticles (RNPs), and ribosomal subunits across the nuclear envelope. Due to its 8-fold rotational symmetry, all subunits are present with 8 copies or multiples thereof. Interacts with NUP188. In terms of processing, the N-terminus is blocked. Post-translationally, phosphorylated by CDC28.

The protein resides in the nucleus. The protein localises to the nuclear pore complex. Its subcellular location is the nucleus membrane. Functionally, functions as a component of the nuclear pore complex (NPC). NPC components, collectively referred to as nucleoporins (NUPs), can play the role of both NPC structural components and of docking or interaction partners for transiently associated nuclear transport factors. POM152 is important for the de novo assembly of NPCs. This is Nucleoporin POM152 (POM152) from Saccharomyces cerevisiae (strain ATCC 204508 / S288c) (Baker's yeast).